A 61-amino-acid chain; its full sequence is uncharacterized protein (61 aa).

The stretch at 24–60 (WMRYESERDEKLRMLERMRDELEAELEEIKREIERLR) forms a coiled coil.

This is an uncharacterized protein from Archaeoglobus fulgidus (strain ATCC 49558 / DSM 4304 / JCM 9628 / NBRC 100126 / VC-16).